The chain runs to 591 residues: Proteasome-associated ATPase (591 aa).

The stretch at 8–77 forms a coiled coil; it reads DSVAAARELE…LREEVDRLGQ (70 aa). Position 278–283 (278–283) interacts with ATP; sequence GCGKTL. The tract at residues 590-591 is docks into pockets in the proteasome alpha-ring; the sequence is YL.

Belongs to the AAA ATPase family. Homohexamer. Assembles into a hexameric ring structure that caps the 20S proteasome core. Strongly interacts with the prokaryotic ubiquitin-like protein Pup through a hydrophobic interface; the interacting region of ARC lies in its N-terminal coiled-coil domain. There is one Pup binding site per ARC hexamer ring. Upon ATP-binding, the C-terminus of ARC interacts with the alpha-rings of the proteasome core, possibly by binding to the intersubunit pockets.

It participates in protein degradation; proteasomal Pup-dependent pathway. Its function is as follows. ATPase which is responsible for recognizing, binding, unfolding and translocation of pupylated proteins into the bacterial 20S proteasome core particle. May be essential for opening the gate of the 20S proteasome via an interaction with its C-terminus, thereby allowing substrate entry and access to the site of proteolysis. Thus, the C-termini of the proteasomal ATPase may function like a 'key in a lock' to induce gate opening and therefore regulate proteolysis. In Rhodococcus jostii (strain RHA1), this protein is Proteasome-associated ATPase.